The chain runs to 497 residues: Probable cytosol aminopeptidase (497 aa).

Mn(2+)-binding residues include lysine 262 and aspartate 267. Residue lysine 274 is part of the active site. Aspartate 285, aspartate 344, and glutamate 346 together coordinate Mn(2+). Arginine 348 is an active-site residue.

The protein belongs to the peptidase M17 family. Requires Mn(2+) as cofactor.

The protein resides in the cytoplasm. It carries out the reaction Release of an N-terminal amino acid, Xaa-|-Yaa-, in which Xaa is preferably Leu, but may be other amino acids including Pro although not Arg or Lys, and Yaa may be Pro. Amino acid amides and methyl esters are also readily hydrolyzed, but rates on arylamides are exceedingly low.. The catalysed reaction is Release of an N-terminal amino acid, preferentially leucine, but not glutamic or aspartic acids.. Its function is as follows. Presumably involved in the processing and regular turnover of intracellular proteins. Catalyzes the removal of unsubstituted N-terminal amino acids from various peptides. The polypeptide is Probable cytosol aminopeptidase (Rhizobium etli (strain ATCC 51251 / DSM 11541 / JCM 21823 / NBRC 15573 / CFN 42)).